A 276-amino-acid polypeptide reads, in one-letter code: Triple specificity protein phosphatase PtpB (276 aa).

Residue cysteine 160 is the Phosphocysteine intermediate of the active site. The UIM-like region stretch occupies residues 232 to 250 (LGVRAEYLAAARQTIDETY).

It belongs to the protein-tyrosine phosphatase family. Interacts (via UIM-like region) with host ubiquitin; activating the phosphatidylinositol phosphate phosphatase activity.

It is found in the secreted. The protein localises to the host cytoplasm. It localises to the host cell membrane. The enzyme catalyses O-phospho-L-tyrosyl-[protein] + H2O = L-tyrosyl-[protein] + phosphate. The catalysed reaction is O-phospho-L-seryl-[protein] + H2O = L-seryl-[protein] + phosphate. It carries out the reaction O-phospho-L-threonyl-[protein] + H2O = L-threonyl-[protein] + phosphate. It catalyses the reaction 1,2-dioctanoyl-sn-glycero-3-phospho-(1-D-myo-inositol-3-phosphate) + H2O = 1,2-dioctanoyl-sn-glycero-3-phospho-(1D-myo-inositol) + phosphate. The enzyme catalyses 1,2-dioctanoyl-sn-glycero-3-phospho-(1-D-myo-inositol-4-phosphate) + H2O = 1,2-dioctanoyl-sn-glycero-3-phospho-(1D-myo-inositol) + phosphate. The catalysed reaction is 1,2-dioctanoyl-sn-glycero-3-phospho-(1D-myo-inositol-5-phosphate) + H2O = 1,2-dioctanoyl-sn-glycero-3-phospho-(1D-myo-inositol) + phosphate. Binding to host ubiquitin is required to activate the phosphatidylinositol phosphate phosphatase activity. Phosphatase activity is inhibited by sodium orthovanadate, a specific inhibitor of tyrosine phosphatases, but not by okadaic acid, an inhibitor of serine/threonine phosphatases. Inhibition of the enzyme reduces mycobacterial survival in infected macrophages. Inhibitors also enhance killing efficacy by first-line antibiotics. Functionally, essential virulence factor that promotes mycobacterial survival within host macrophages. Acts as a phosphatase that possesses triple substrate specificity toward phosphotyrosine, phosphoserine/threonine and phosphoinositides. Supports mycobacteria survival during infection by modulating the normal host signaling pathways, attenuating the bactericidal immune responses and promoting the host cell survival. Inhibits host pyroptosis by disrupting the membrane localization of host gasdermin-D (GSDMD): acts by catalyzing dephosphorylation of phosphatidylinositol (4,5)-bisphosphate and phosphatidylinositol 4-phosphate, thereby inhibiting the membrane targeting of GSDMD and subsequent cytokine release and pyroptosis. Inhibits host inflammatory responses and apoptosis through impeding the NF-kappa-B and MAPK signal pathways and TP53/p53 expression in the macrophage. Blocks the IL6/IL-6 production by down-regulating ERK1/2, p38 and p65 activity. Prevents macrophage cell death by activating the Akt pathway and blocking caspase 3 activity. Reduces the expression of iNOS in activated macrophages and inhibits the generation of destroying reactive nitrogen intermediate NO. The chain is Triple specificity protein phosphatase PtpB from Mycobacterium tuberculosis (strain ATCC 25618 / H37Rv).